Reading from the N-terminus, the 149-residue chain is MTSILVLHGPNLNLLGTRQPEVYGTTTLEMVNSACIAHGQSRGLSVACLQSNHEGALVDAIHAAKGVHRGIVLNAGAYTHTSIALRDAISSVELPVVEVHLSNIHAREAFRHVSHIAPVALGQICGFGAQGYLLALDALAAHLSPEGAR.

Tyr-23 functions as the Proton acceptor in the catalytic mechanism. Positions 74, 80, and 87 each coordinate substrate. His-100 serves as the catalytic Proton donor. Residues 101 to 102 and Arg-111 contribute to the substrate site; that span reads LS.

This sequence belongs to the type-II 3-dehydroquinase family. In terms of assembly, homododecamer.

It catalyses the reaction 3-dehydroquinate = 3-dehydroshikimate + H2O. It participates in metabolic intermediate biosynthesis; chorismate biosynthesis; chorismate from D-erythrose 4-phosphate and phosphoenolpyruvate: step 3/7. Its function is as follows. Catalyzes a trans-dehydration via an enolate intermediate. The protein is 3-dehydroquinate dehydratase of Ruegeria pomeroyi (strain ATCC 700808 / DSM 15171 / DSS-3) (Silicibacter pomeroyi).